A 460-amino-acid chain; its full sequence is Probable amino acid transporter skat-1 (460 aa).

10 consecutive transmembrane segments (helical) span residues 64 to 84 (LGGL…NWYG), 132 to 152 (FVNV…ILFI), 172 to 192 (MILM…FTEM), 194 to 214 (IVSF…AVIM), 236 to 256 (TITM…ILPI), 270 to 290 (FGVL…LGFF), 316 to 336 (VNVF…YVVY), 362 to 382 (GFRV…PKLE), 383 to 403 (IMIP…FPPF), and 426 to 446 (IFIN…GVYT).

The protein belongs to the amino acid/polyamine transporter 2 family. In terms of tissue distribution, expressed in the head, tail, body and ventral nerve cord neurons, muscles of the vulva, and intestine.

It is found in the membrane. It localises to the cytoplasmic granule. Plays a role in the accumulation of vital dyes and endogenous fluorescent compounds in lysosome related organelles. Has an effect on lysosome related organelle (LRO) function, in a pathway with serotonin. The sequence is that of Probable amino acid transporter skat-1 from Caenorhabditis elegans.